Reading from the N-terminus, the 473-residue chain is Aspartyl/glutamyl-tRNA(Asn/Gln) amidotransferase subunit B (473 aa).

This sequence belongs to the GatB/GatE family. GatB subfamily. Heterotrimer of A, B and C subunits.

It carries out the reaction L-glutamyl-tRNA(Gln) + L-glutamine + ATP + H2O = L-glutaminyl-tRNA(Gln) + L-glutamate + ADP + phosphate + H(+). The enzyme catalyses L-aspartyl-tRNA(Asn) + L-glutamine + ATP + H2O = L-asparaginyl-tRNA(Asn) + L-glutamate + ADP + phosphate + 2 H(+). In terms of biological role, allows the formation of correctly charged Asn-tRNA(Asn) or Gln-tRNA(Gln) through the transamidation of misacylated Asp-tRNA(Asn) or Glu-tRNA(Gln) in organisms which lack either or both of asparaginyl-tRNA or glutaminyl-tRNA synthetases. The reaction takes place in the presence of glutamine and ATP through an activated phospho-Asp-tRNA(Asn) or phospho-Glu-tRNA(Gln). The polypeptide is Aspartyl/glutamyl-tRNA(Asn/Gln) amidotransferase subunit B (Francisella tularensis subsp. novicida (strain U112)).